Consider the following 784-residue polypeptide: Toll-like receptor 2 (784 aa).

The first 20 residues, Met-1–Gly-20, serve as a signal peptide directing secretion. Over Ala-21–Arg-587 the chain is Extracellular. Cysteines 30 and 36 form a disulfide. LRR repeat units lie at residues Val-54–Asn-77, Leu-78–Asn-101, Leu-102–Ala-125, Leu-126–Asn-150, Leu-151–Phe-175, Leu-176–Asn-199, Ile-200–Ser-223, Leu-224–Ser-250, Val-251–Gly-278, Ile-279–Asn-308, Val-309–Lys-337, Val-338–Ser-361, Leu-362–Phe-388, Leu-389–Asn-414, Leu-415–Lys-437, Met-438–Gln-457, Thr-458–Gln-478, Leu-479–Val-500, and Leu-501–Gln-524. Asn-114 carries N-linked (GlcNAc...) asparagine glycosylation. Residue Asn-199 is glycosylated (N-linked (GlcNAc...) asparagine). The N-linked (GlcNAc...) asparagine glycan is linked to Asn-248. An intrachain disulfide couples Cys-353 to Cys-382. A disulfide bond links Cys-432 and Cys-454. Asn-442 carries N-linked (GlcNAc...) asparagine glycosylation. The LRRCT domain maps to Leu-525–Arg-579. Residues Ala-588–Leu-608 form a helical membrane-spanning segment. Residues Cys-609–Ser-784 are Cytoplasmic-facing. Positions Leu-639–Ile-782 constitute a TIR domain. A Glycyl lysine isopeptide (Lys-Gly) (interchain with G-Cter in ubiquitin) cross-link involves residue Lys-754. An ATG16L1-binding motif motif is present at residues Tyr-761–Leu-778.

This sequence belongs to the Toll-like receptor family. In terms of assembly, interacts with LY96, TLR1 and TLR6 (via extracellular domain). TLR2 seems to exist in heterodimers with either TLR1 or TLR6 before stimulation by the ligand. The heterodimers form bigger oligomers in response to their corresponding ligands as well as further heterotypic associations with other receptors such as CD14 and/or CD36. Binds MYD88 (via TIR domain). Interacts with TICAM1. Interacts with CNPY3. Interacts with ATG16L1. Interacts with PPP1R11. Interacts with TICAM2. Interacts with TIRAP. Post-translationally, ubiquitinated at Lys-754 by PPP1R11, leading to its degradation. Deubiquitinated by USP2. Glycosylation of Asn-442 is critical for secretion of the N-terminal ectodomain of TLR2.

Its subcellular location is the membrane. The protein resides in the cytoplasmic vesicle. It is found in the phagosome membrane. It localises to the membrane raft. In terms of biological role, cooperates with LY96 to mediate the innate immune response to bacterial lipoproteins and other microbial cell wall components. Cooperates with TLR1 or TLR6 to mediate the innate immune response to bacterial lipoproteins or lipopeptides. Acts via MYD88 and TRAF6, leading to NF-kappa-B activation, cytokine secretion and the inflammatory response. May also promote apoptosis in response to lipoproteins. Forms activation clusters composed of several receptors depending on the ligand, these clusters trigger signaling from the cell surface and subsequently are targeted to the Golgi in a lipid-raft dependent pathway. Forms the cluster TLR2:TLR6:CD14:CD36 in response to diacylated lipopeptides and TLR2:TLR1:CD14 in response to triacylated lipopeptides. The protein is Toll-like receptor 2 (TLR2) of Capra hircus (Goat).